Consider the following 571-residue polypeptide: Proline--tRNA ligase (571 aa).

The protein belongs to the class-II aminoacyl-tRNA synthetase family. ProS type 1 subfamily. In terms of assembly, homodimer.

It is found in the cytoplasm. It carries out the reaction tRNA(Pro) + L-proline + ATP = L-prolyl-tRNA(Pro) + AMP + diphosphate. In terms of biological role, catalyzes the attachment of proline to tRNA(Pro) in a two-step reaction: proline is first activated by ATP to form Pro-AMP and then transferred to the acceptor end of tRNA(Pro). As ProRS can inadvertently accommodate and process non-cognate amino acids such as alanine and cysteine, to avoid such errors it has two additional distinct editing activities against alanine. One activity is designated as 'pretransfer' editing and involves the tRNA(Pro)-independent hydrolysis of activated Ala-AMP. The other activity is designated 'posttransfer' editing and involves deacylation of mischarged Ala-tRNA(Pro). The misacylated Cys-tRNA(Pro) is not edited by ProRS. The sequence is that of Proline--tRNA ligase from Vibrio campbellii (strain ATCC BAA-1116).